A 296-amino-acid chain; its full sequence is Nucleotide-binding protein SPJ_1472 (296 aa).

13-20 (GMSGAGKT) contacts ATP. 63–66 (DMRS) is a binding site for GTP.

The protein belongs to the RapZ-like family.

Functionally, displays ATPase and GTPase activities. In Streptococcus pneumoniae (strain JJA), this protein is Nucleotide-binding protein SPJ_1472.